The primary structure comprises 518 residues: Ribonuclease Y (518 aa).

Residues 2 to 22 (VLNILLAIVGLIVGLGLGFVI) form a helical membrane-spanning segment. Positions 91-119 (QREQTLDRKDDSLEKREGSLEEKEEKLGA) are disordered. The 61-residue stretch at 208–268 (TVSVVTLPND…IRREIARMTL (61 aa)) folds into the KH domain. The 94-residue stretch at 334-427 (VLNHSIEVAK…VAAADALSAA (94 aa)) folds into the HD domain.

It belongs to the RNase Y family.

It localises to the cell membrane. Its function is as follows. Endoribonuclease that initiates mRNA decay. This is Ribonuclease Y from Enterococcus faecalis (strain ATCC 700802 / V583).